We begin with the raw amino-acid sequence, 360 residues long: Ferredoxin--NADP reductase, leaf isozyme, chloroplastic (360 aa).

Residues 1–52 constitute a chloroplast transit peptide; it reads MAAAVTAAVSLPYSNSTSLPIRTSIVAPERLVFKKVSLNNVSISGRVGTIRA. One can recognise an FAD-binding FR-type domain in the interval 81-203; the sequence is KEPYVGRCLL…TGPVGKEMLM (123 aa). FAD-binding positions include 139–142, 160–162, tyrosine 166, 177–179, and threonine 218; these read RLYS, CVK, and VCS. NADP(+) is bound by residues serine 142 and lysine 162. Residues threonine 218, 250 to 251, 280 to 281, lysine 290, 319 to 320, and glutamate 358 each bind NADP(+); these read VP, SR, and GL.

Belongs to the ferredoxin--NADP reductase type 1 family. Monomer. Interacts with TIC62 (via C-terminus). Requires FAD as cofactor.

It is found in the plastid. The protein resides in the chloroplast stroma. It localises to the chloroplast thylakoid membrane. It catalyses the reaction 2 reduced [2Fe-2S]-[ferredoxin] + NADP(+) + H(+) = 2 oxidized [2Fe-2S]-[ferredoxin] + NADPH. The protein operates within energy metabolism; photosynthesis. Its function is as follows. May play a key role in regulating the relative amounts of cyclic and non-cyclic electron flow to meet the demands of the plant for ATP and reducing power. In Pisum sativum (Garden pea), this protein is Ferredoxin--NADP reductase, leaf isozyme, chloroplastic (PETH).